Reading from the N-terminus, the 459-residue chain is Bifunctional protein GlmU (459 aa).

The tract at residues 1–229 (MSNFAIILAA…FDESLGVNDR (229 aa)) is pyrophosphorylase. UDP-N-acetyl-alpha-D-glucosamine-binding positions include 8 to 11 (LAAG), Lys22, Gln72, 77 to 78 (GT), 101 to 102 (GD), Gly139, Glu154, Asn169, and Asn227. Asp102 contributes to the Ca(2+) binding site. Asp102 provides a ligand contact to Mg(2+). Asn227 is a binding site for Ca(2+). Residue Asn227 participates in Mg(2+) binding. The tract at residues 230 to 250 (VALATAESVMRRRINHKHMVN) is linker. Residues 251–459 (GVSFVNPEAT…TRLPHHPKNQ (209 aa)) are N-acetyltransferase. Residues Arg332 and Lys350 each contribute to the UDP-N-acetyl-alpha-D-glucosamine site. The Proton acceptor role is filled by His362. 2 residues coordinate UDP-N-acetyl-alpha-D-glucosamine: Tyr365 and Asn376. Residues Ala379, 385–386 (NY), Ser404, Ala422, and Arg439 each bind acetyl-CoA.

It in the N-terminal section; belongs to the N-acetylglucosamine-1-phosphate uridyltransferase family. The protein in the C-terminal section; belongs to the transferase hexapeptide repeat family. Homotrimer. Mg(2+) is required as a cofactor. Requires Ca(2+) as cofactor.

It is found in the cytoplasm. The catalysed reaction is alpha-D-glucosamine 1-phosphate + acetyl-CoA = N-acetyl-alpha-D-glucosamine 1-phosphate + CoA + H(+). The enzyme catalyses N-acetyl-alpha-D-glucosamine 1-phosphate + UTP + H(+) = UDP-N-acetyl-alpha-D-glucosamine + diphosphate. It participates in nucleotide-sugar biosynthesis; UDP-N-acetyl-alpha-D-glucosamine biosynthesis; N-acetyl-alpha-D-glucosamine 1-phosphate from alpha-D-glucosamine 6-phosphate (route II): step 2/2. The protein operates within nucleotide-sugar biosynthesis; UDP-N-acetyl-alpha-D-glucosamine biosynthesis; UDP-N-acetyl-alpha-D-glucosamine from N-acetyl-alpha-D-glucosamine 1-phosphate: step 1/1. Its pathway is bacterial outer membrane biogenesis; LPS lipid A biosynthesis. Functionally, catalyzes the last two sequential reactions in the de novo biosynthetic pathway for UDP-N-acetylglucosamine (UDP-GlcNAc). The C-terminal domain catalyzes the transfer of acetyl group from acetyl coenzyme A to glucosamine-1-phosphate (GlcN-1-P) to produce N-acetylglucosamine-1-phosphate (GlcNAc-1-P), which is converted into UDP-GlcNAc by the transfer of uridine 5-monophosphate (from uridine 5-triphosphate), a reaction catalyzed by the N-terminal domain. This chain is Bifunctional protein GlmU, found in Streptococcus pneumoniae serotype 4 (strain ATCC BAA-334 / TIGR4).